Here is a 284-residue protein sequence, read N- to C-terminus: Bifunctional protein FolD 2 (284 aa).

NADP(+)-binding positions include 164 to 166 (GRG), Ser189, and Ile230.

Belongs to the tetrahydrofolate dehydrogenase/cyclohydrolase family. As to quaternary structure, homodimer.

The enzyme catalyses (6R)-5,10-methylene-5,6,7,8-tetrahydrofolate + NADP(+) = (6R)-5,10-methenyltetrahydrofolate + NADPH. The catalysed reaction is (6R)-5,10-methenyltetrahydrofolate + H2O = (6R)-10-formyltetrahydrofolate + H(+). It functions in the pathway one-carbon metabolism; tetrahydrofolate interconversion. Catalyzes the oxidation of 5,10-methylenetetrahydrofolate to 5,10-methenyltetrahydrofolate and then the hydrolysis of 5,10-methenyltetrahydrofolate to 10-formyltetrahydrofolate. This is Bifunctional protein FolD 2 from Desulfitobacterium hafniense (strain Y51).